We begin with the raw amino-acid sequence, 450 residues long: tRNA-2-methylthio-N(6)-dimethylallyladenosine synthase (450 aa).

The MTTase N-terminal domain maps to 3 to 119 (RRYYITTFGC…LGELLEQVWN (117 aa)). 6 residues coordinate [4Fe-4S] cluster: Cys-12, Cys-48, Cys-82, Cys-154, Cys-158, and Cys-161. Residues 140–377 (RDSTVTAWVN…NHLVAKIAGD (238 aa)) form the Radical SAM core domain. The TRAM domain occupies 380-444 (QRYLGREEVV…AFSLSGVPLA (65 aa)).

The protein belongs to the methylthiotransferase family. MiaB subfamily. In terms of assembly, monomer. [4Fe-4S] cluster is required as a cofactor.

Its subcellular location is the cytoplasm. The catalysed reaction is N(6)-dimethylallyladenosine(37) in tRNA + (sulfur carrier)-SH + AH2 + 2 S-adenosyl-L-methionine = 2-methylsulfanyl-N(6)-dimethylallyladenosine(37) in tRNA + (sulfur carrier)-H + 5'-deoxyadenosine + L-methionine + A + S-adenosyl-L-homocysteine + 2 H(+). Its function is as follows. Catalyzes the methylthiolation of N6-(dimethylallyl)adenosine (i(6)A), leading to the formation of 2-methylthio-N6-(dimethylallyl)adenosine (ms(2)i(6)A) at position 37 in tRNAs that read codons beginning with uridine. This chain is tRNA-2-methylthio-N(6)-dimethylallyladenosine synthase, found in Thermosynechococcus vestitus (strain NIES-2133 / IAM M-273 / BP-1).